Reading from the N-terminus, the 448-residue chain is MREVISVNAVGQAGCQIGNACWELYSLEHGIRPDGYLQEGLTKPKGGEEGFSTFFNETGSGKFVPRAVYVDLEPNVIDEVRTGAYRELFHPEQLISGKEDAANNYARGHYTVGRELLDDILDRIRKISDQCDGLQGFLFTHSLGGGTGSGLGSLLLEQLSIDYGKKSKLEFAVYPAPQVSTSVVEPYNTVLTTHTTLEHADCTFMVDNEAIYEMCKKNLDISRPSFANLNNLIAQVVSSVTASLRFDGSLNVDLNEFQTNLVPYPRIHFPLVSYAPILSKSKAHHESNSVGEITNACFEPGNQMVKCDPRVGKYMATCLLYRGDVVTRDVQTAVAQVKNKKTVQLVDWCPTGFKIGICYEPPTATPNSQLSSVSRAVCMLSNTTAIADAWKRIDRKFDLMYAKRAFVHWYVGEGMEEGEFTEAREDLAALERDYIEVGADSYADEEEF.

8 residues coordinate GTP: Q12, E73, S142, G146, T147, T181, N208, and N230. E73 contacts Mg(2+). E256 is an active-site residue.

The protein belongs to the tubulin family. In terms of assembly, dimer of alpha and beta chains. A typical microtubule is a hollow water-filled tube with an outer diameter of 25 nm and an inner diameter of 15 nM. Alpha-beta heterodimers associate head-to-tail to form protofilaments running lengthwise along the microtubule wall with the beta-tubulin subunit facing the microtubule plus end conferring a structural polarity. Microtubules usually have 13 protofilaments but different protofilament numbers can be found in some organisms and specialized cells. It depends on Mg(2+) as a cofactor.

The protein localises to the cytoplasm. The protein resides in the cytoskeleton. The catalysed reaction is GTP + H2O = GDP + phosphate + H(+). In terms of biological role, tubulin is the major constituent of microtubules, a cylinder consisting of laterally associated linear protofilaments composed of alpha- and beta-tubulin heterodimers. Microtubules grow by the addition of GTP-tubulin dimers to the microtubule end, where a stabilizing cap forms. Below the cap, tubulin dimers are in GDP-bound state, owing to GTPase activity of alpha-tubulin. The polypeptide is Tubulin alpha chain (TUB1) (Eremothecium gossypii (strain ATCC 10895 / CBS 109.51 / FGSC 9923 / NRRL Y-1056) (Yeast)).